The primary structure comprises 700 residues: Peroxisomal acyl-coenzyme A oxidase 3 (700 aa).

Ala2 is modified (N-acetylalanine). Thr281 carries the phosphothreonine modification. The short motif at 698 to 700 (SKL) is the Microbody targeting signal element.

This sequence belongs to the acyl-CoA oxidase family. The cofactor is FAD.

It localises to the peroxisome. The enzyme catalyses a 2,3-saturated acyl-CoA + O2 = a (2E)-enoyl-CoA + H2O2. It catalyses the reaction (2S)-pristanoyl-CoA + O2 = (2E)-pristenoyl-CoA + H2O2. It carries out the reaction tetracosanoyl-CoA + O2 = (2E)-tetracosenoyl-CoA + H2O2. The catalysed reaction is hexadecanoyl-CoA + O2 = (2E)-hexadecenoyl-CoA + H2O2. The enzyme catalyses hexadecanedioyl-CoA + O2 = (2E)-hexadecenedioyl-CoA + H2O2. The protein operates within lipid metabolism; peroxisomal fatty acid beta-oxidation. Oxidizes the CoA-esters of 2-methyl-branched fatty acids. This chain is Peroxisomal acyl-coenzyme A oxidase 3 (ACOX3), found in Homo sapiens (Human).